We begin with the raw amino-acid sequence, 159 residues long: Alpha-lactalbumin (159 aa).

Residues 1 to 19 (MMRFVPLFLACISLPAFQA) form the signal peptide. The C-type lysozyme domain occupies 20-142 (TEFTKCEVSH…KLEQWRCEKP (123 aa)). Disulfide bonds link Cys25–Cys139, Cys47–Cys130, Cys80–Cys96, and Cys92–Cys110. An N-linked (GlcNAc...) asparagine glycan is attached at Asn64. Ca(2+) contacts are provided by Lys98, Asp101, Asp106, and Asp107.

This sequence belongs to the glycosyl hydrolase 22 family. Lactose synthase (LS) is a heterodimer of a catalytic component, beta1,4-galactosyltransferase (beta4Gal-T1) and a regulatory component, alpha-lactalbumin (LA). As to expression, mammary gland specific. Secreted in milk.

The protein resides in the secreted. In terms of biological role, regulatory subunit of lactose synthase, changes the substrate specificity of galactosyltransferase in the mammary gland making glucose a good acceptor substrate for this enzyme. This enables LS to synthesize lactose, the major carbohydrate component of milk. In other tissues, galactosyltransferase transfers galactose onto the N-acetylglucosamine of the oligosaccharide chains in glycoproteins. In Rattus norvegicus (Rat), this protein is Alpha-lactalbumin (Lalba).